A 397-amino-acid chain; its full sequence is Acetate kinase (397 aa).

Asparagine 8 contributes to the Mg(2+) binding site. Lysine 15 provides a ligand contact to ATP. Arginine 89 contributes to the substrate binding site. Aspartate 146 acts as the Proton donor/acceptor in catalysis. ATP-binding positions include 206 to 210, 283 to 285, and 331 to 335; these read HVGNG, DMR, and GMGEN. Glutamate 383 serves as a coordination point for Mg(2+).

The protein belongs to the acetokinase family. In terms of assembly, homodimer. Mg(2+) is required as a cofactor. It depends on Mn(2+) as a cofactor.

It is found in the cytoplasm. The catalysed reaction is acetate + ATP = acetyl phosphate + ADP. The protein operates within metabolic intermediate biosynthesis; acetyl-CoA biosynthesis; acetyl-CoA from acetate: step 1/2. Catalyzes the formation of acetyl phosphate from acetate and ATP. Can also catalyze the reverse reaction. This chain is Acetate kinase, found in Streptococcus agalactiae serotype Ia (strain ATCC 27591 / A909 / CDC SS700).